Consider the following 248-residue polypeptide: 1-(5-phosphoribosyl)-5-[(5-phosphoribosylamino)methylideneamino] imidazole-4-carboxamide isomerase (248 aa).

The active-site Proton acceptor is the Asp8. The Proton donor role is filled by Asp131.

Belongs to the HisA/HisF family.

The protein localises to the cytoplasm. It carries out the reaction 1-(5-phospho-beta-D-ribosyl)-5-[(5-phospho-beta-D-ribosylamino)methylideneamino]imidazole-4-carboxamide = 5-[(5-phospho-1-deoxy-D-ribulos-1-ylimino)methylamino]-1-(5-phospho-beta-D-ribosyl)imidazole-4-carboxamide. It functions in the pathway amino-acid biosynthesis; L-histidine biosynthesis; L-histidine from 5-phospho-alpha-D-ribose 1-diphosphate: step 4/9. This is 1-(5-phosphoribosyl)-5-[(5-phosphoribosylamino)methylideneamino] imidazole-4-carboxamide isomerase from Cupriavidus pinatubonensis (strain JMP 134 / LMG 1197) (Cupriavidus necator (strain JMP 134)).